A 62-amino-acid chain; its full sequence is Large ribosomal subunit protein bL32 (62 aa).

Positions 1–16 (MAVPKRKTSPMKRGFR) are enriched in basic residues. The interval 1–62 (MAVPKRKTSP…QILTPKNKEA (62 aa)) is disordered. Residues 28 to 44 (VEDKDSGELRRPHHVDL) are compositionally biased toward basic and acidic residues.

It belongs to the bacterial ribosomal protein bL32 family.

The polypeptide is Large ribosomal subunit protein bL32 (Methylocella silvestris (strain DSM 15510 / CIP 108128 / LMG 27833 / NCIMB 13906 / BL2)).